The chain runs to 428 residues: YTH domain-containing protein ECT1 (428 aa).

In terms of domain architecture, YTH spans 245–382 (AKFFVIKSYS…EHGTKIIKIF (138 aa)). Residues 251 to 253 (KSY), Asp257, 267 to 268 (WS), Asn300, Trp324, Trp329, and Trp337 each bind RNA.

In terms of assembly, interacts (via C-terminus) with CIPK1. As to expression, expressed in root apex, shoot apex, lateral root primordia, stamens, carpels and trichomes.

Its subcellular location is the nucleus. The protein localises to the cytoplasm. In terms of biological role, specifically recognizes and binds N6-methyladenosine (m6A)-containing RNAs, and regulates mRNA stability. M6A is a modification present at internal sites of mRNAs and some non-coding RNAs and plays a role in mRNA stability and processing. The polypeptide is YTH domain-containing protein ECT1 (Arabidopsis thaliana (Mouse-ear cress)).